The primary structure comprises 139 residues: DNA-directed RNA polymerase II subunit Rpb4 (139 aa).

The protein belongs to the eukaryotic RPB4 RNA polymerase subunit family. As to quaternary structure, RNA polymerase II consists of 12 different subunits.

The protein resides in the nucleus. Its subcellular location is the chromosome. In terms of biological role, DNA-dependent RNA polymerase catalyzes the transcription of DNA into RNA using the four ribonucleoside triphosphates as substrates. Associates with POLR2G. This Drosophila melanogaster (Fruit fly) protein is DNA-directed RNA polymerase II subunit Rpb4.